A 172-amino-acid polypeptide reads, in one-letter code: Small ribosomal subunit protein uS5 (172 aa).

Positions 17 to 80 (LREKMISVNR…EQARRNMFKV (64 aa)) constitute an S5 DRBM domain.

It belongs to the universal ribosomal protein uS5 family. Part of the 30S ribosomal subunit. Contacts proteins S4 and S8.

With S4 and S12 plays an important role in translational accuracy. In terms of biological role, located at the back of the 30S subunit body where it stabilizes the conformation of the head with respect to the body. This is Small ribosomal subunit protein uS5 from Burkholderia thailandensis (strain ATCC 700388 / DSM 13276 / CCUG 48851 / CIP 106301 / E264).